We begin with the raw amino-acid sequence, 265 residues long: Hydroxyethylthiazole kinase (265 aa).

M36 contributes to the substrate binding site. ATP-binding residues include K112 and S160. Position 187 (G187) interacts with substrate.

It belongs to the Thz kinase family. Mg(2+) is required as a cofactor.

The enzyme catalyses 5-(2-hydroxyethyl)-4-methylthiazole + ATP = 4-methyl-5-(2-phosphooxyethyl)-thiazole + ADP + H(+). It functions in the pathway cofactor biosynthesis; thiamine diphosphate biosynthesis; 4-methyl-5-(2-phosphoethyl)-thiazole from 5-(2-hydroxyethyl)-4-methylthiazole: step 1/1. Functionally, catalyzes the phosphorylation of the hydroxyl group of 4-methyl-5-beta-hydroxyethylthiazole (THZ). The protein is Hydroxyethylthiazole kinase of Clostridium perfringens (strain SM101 / Type A).